Reading from the N-terminus, the 228-residue chain is N-acylneuraminate cytidylyltransferase (228 aa).

This sequence belongs to the CMP-NeuNAc synthase family.

The protein resides in the cytoplasm. The enzyme catalyses an N-acylneuraminate + CTP = a CMP-N-acyl-beta-neuraminate + diphosphate. The chain is N-acylneuraminate cytidylyltransferase (neuA) from Neisseria meningitidis serogroup B (strain ATCC BAA-335 / MC58).